Here is a 260-residue protein sequence, read N- to C-terminus: Cell division protein FtsQ (260 aa).

Residues 1–26 (MINKVLLEGQRITRSPQVKQHACGAS) are Cytoplasmic-facing. The chain crosses the membrane as a helical span at residues 27–47 (FFLVVLLLIGGLLYSTISWMW). The Periplasmic portion of the chain corresponds to 48–260 (DEQRLPLSKL…QELTQEKNDD (213 aa)). The POTRA domain occupies 52–122 (LPLSKLVLQG…DTIKVYLTEY (71 aa)).

This sequence belongs to the FtsQ/DivIB family. FtsQ subfamily. In terms of assembly, part of a complex composed of FtsB, FtsL and FtsQ.

Its subcellular location is the cell inner membrane. Essential cell division protein. May link together the upstream cell division proteins, which are predominantly cytoplasmic, with the downstream cell division proteins, which are predominantly periplasmic. May control correct divisome assembly. The protein is Cell division protein FtsQ of Vibrio cholerae serotype O1 (strain ATCC 39315 / El Tor Inaba N16961).